A 115-amino-acid chain; its full sequence is NADH-ubiquinone oxidoreductase chain 3 (115 aa).

Helical transmembrane passes span 3 to 23, 55 to 75, and 87 to 107; these read LFIM…LNLL, FFMV…LLPL, and TITW…YEWL.

This sequence belongs to the complex I subunit 3 family.

Its subcellular location is the mitochondrion membrane. The enzyme catalyses a ubiquinone + NADH + 5 H(+)(in) = a ubiquinol + NAD(+) + 4 H(+)(out). In terms of biological role, core subunit of the mitochondrial membrane respiratory chain NADH dehydrogenase (Complex I) that is believed to belong to the minimal assembly required for catalysis. Complex I functions in the transfer of electrons from NADH to the respiratory chain. The immediate electron acceptor for the enzyme is believed to be ubiquinone. The chain is NADH-ubiquinone oxidoreductase chain 3 (MT-ND3) from Alligator mississippiensis (American alligator).